A 271-amino-acid polypeptide reads, in one-letter code: NADPH-dependent 7-cyano-7-deazaguanine reductase (271 aa).

81-83 (IES) contacts substrate. 83-84 (SK) contributes to the NADPH binding site. Catalysis depends on cysteine 177, which acts as the Thioimide intermediate. The active-site Proton donor is aspartate 184. 216 to 217 (HE) contributes to the substrate binding site. 245-246 (RG) contacts NADPH.

This sequence belongs to the GTP cyclohydrolase I family. QueF type 2 subfamily. In terms of assembly, homodimer.

The protein resides in the cytoplasm. The catalysed reaction is 7-aminomethyl-7-carbaguanine + 2 NADP(+) = 7-cyano-7-deazaguanine + 2 NADPH + 3 H(+). It participates in tRNA modification; tRNA-queuosine biosynthesis. In terms of biological role, catalyzes the NADPH-dependent reduction of 7-cyano-7-deazaguanine (preQ0) to 7-aminomethyl-7-deazaguanine (preQ1). The chain is NADPH-dependent 7-cyano-7-deazaguanine reductase from Xanthomonas axonopodis pv. citri (strain 306).